A 730-amino-acid polypeptide reads, in one-letter code: Semaphorin-1A (730 aa).

Residues 1–20 (MRAALVAVAALLWVALHAAA) form the signal peptide. Topologically, residues 21–630 (WVNDVSPKMY…LPIYTAETLT (610 aa)) are extracellular. Positions 28–490 (KMYVQFGEER…SDDEILAIKL (463 aa)) constitute a Sema domain. N44 and N71 each carry an N-linked (GlcNAc...) asparagine glycan. 2 disulfide bridges follow: C97–C107 and C125–C134. N-linked (GlcNAc...) asparagine glycans are attached at residues N163 and N267. 2 disulfide bridges follow: C244-C358 and C268-C317. N360 carries an N-linked (GlcNAc...) asparagine glycan. Cystine bridges form between C493/C512 and C504/C521. N539 carries an N-linked (GlcNAc...) asparagine glycan. Residues 631 to 651 (IAIVTSCLGALVVGFISGFLF) traverse the membrane as a helical segment. At 652–730 (SRRCRGEDYT…PIQKVKKTYI (79 aa)) the chain is on the cytoplasmic side. Residues 708-720 (ANGKNANSSAENK) are compositionally biased toward low complexity. Positions 708-730 (ANGKNANSSAENKPIQKVKKTYI) are disordered.

The protein belongs to the semaphorin family. In terms of tissue distribution, dynamically expressed on a subset of axon pathways in the developing CNS and on circumferential bands of epithelial cells in developing limb buds.

The protein resides in the membrane. In terms of biological role, plays a role in growth cones guidance. This is Semaphorin-1A (SEMA-1A) from Schistocerca americana (American grasshopper).